The sequence spans 492 residues: Glutamyl-tRNA(Gln) amidotransferase subunit A, mitochondrial (492 aa).

Catalysis depends on charge relay system residues Lys78 and Ser159. Ser183 acts as the Acyl-ester intermediate in catalysis.

This sequence belongs to the amidase family. GatA subfamily. In terms of assembly, subunit of the heterotrimeric GatCAB amidotransferase (AdT) complex, composed of A, B and C subunits.

It is found in the mitochondrion. The catalysed reaction is L-glutamyl-tRNA(Gln) + L-glutamine + ATP + H2O = L-glutaminyl-tRNA(Gln) + L-glutamate + ADP + phosphate + H(+). In terms of biological role, allows the formation of correctly charged Gln-tRNA(Gln) through the transamidation of misacylated Glu-tRNA(Gln) in the mitochondria. The reaction takes place in the presence of glutamine and ATP through an activated gamma-phospho-Glu-tRNA(Gln). This chain is Glutamyl-tRNA(Gln) amidotransferase subunit A, mitochondrial, found in Anopheles gambiae (African malaria mosquito).